The following is a 456-amino-acid chain: Phosphoglucomutase/phosphomannomutase (456 aa).

Ser-101 serves as the catalytic Phosphoserine intermediate. Positions 101, 243, 245, and 247 each coordinate Mg(2+). Position 101 is a phosphoserine; by autocatalysis (Ser-101).

Belongs to the phosphohexose mutase family. In terms of assembly, homotetramer. Requires Mg(2+) as cofactor. In terms of processing, activated by phosphorylation.

It catalyses the reaction alpha-D-glucose 1-phosphate = alpha-D-glucose 6-phosphate. It carries out the reaction alpha-D-mannose 1-phosphate = D-mannose 6-phosphate. Catalyzes the interconversion of glucose 1-phosphate and glucose 6-phosphate, and the interconversion of mannose 1-phosphate and mannose 6-phosphate. Also displays low activity with deoxyribose 1-phosphate and glucosamine 1-phosphate. This Thermococcus kodakarensis (strain ATCC BAA-918 / JCM 12380 / KOD1) (Pyrococcus kodakaraensis (strain KOD1)) protein is Phosphoglucomutase/phosphomannomutase.